The primary structure comprises 59 residues: UPF0181 protein YoaH (59 aa).

It belongs to the UPF0181 family.

The polypeptide is UPF0181 protein YoaH (Shigella sonnei (strain Ss046)).